Here is a 330-residue protein sequence, read N- to C-terminus: tRNA uridine(34) hydroxylase (330 aa).

Positions 123–217 constitute a Rhodanese domain; it reads SDPEVILVDT…YLEEVKQEES (95 aa). The active-site Cysteine persulfide intermediate is C177.

It belongs to the TrhO family.

The enzyme catalyses uridine(34) in tRNA + AH2 + O2 = 5-hydroxyuridine(34) in tRNA + A + H2O. In terms of biological role, catalyzes oxygen-dependent 5-hydroxyuridine (ho5U) modification at position 34 in tRNAs. This Shewanella sp. (strain MR-4) protein is tRNA uridine(34) hydroxylase.